A 1392-amino-acid polypeptide reads, in one-letter code: DNA-directed RNA polymerase subunit beta'' (1392 aa).

4 residues coordinate Zn(2+): C224, C295, C302, and C305.

It belongs to the RNA polymerase beta' chain family. RpoC2 subfamily. In plastids the minimal PEP RNA polymerase catalytic core is composed of four subunits: alpha, beta, beta', and beta''. When a (nuclear-encoded) sigma factor is associated with the core the holoenzyme is formed, which can initiate transcription. It depends on Zn(2+) as a cofactor.

The protein localises to the plastid. It is found in the chloroplast. The enzyme catalyses RNA(n) + a ribonucleoside 5'-triphosphate = RNA(n+1) + diphosphate. In terms of biological role, DNA-dependent RNA polymerase catalyzes the transcription of DNA into RNA using the four ribonucleoside triphosphates as substrates. The protein is DNA-directed RNA polymerase subunit beta'' of Solanum tuberosum (Potato).